We begin with the raw amino-acid sequence, 87 residues long: MNSLLMITACLAVIGTVWAKEGYIVNYYDGCKYACLKLGENDYCLRECKARYYKSAGGYCYAFACWCTHLYEQAVVWPLPNKTCYGK.

The signal sequence occupies residues 1 to 19; it reads MNSLLMITACLAVIGTVWA. The LCN-type CS-alpha/beta domain maps to 20–85; that stretch reads KEGYIVNYYD…VWPLPNKTCY (66 aa). 4 disulfide bridges follow: Cys31-Cys84, Cys35-Cys60, Cys44-Cys65, and Cys48-Cys67. Residue Tyr85 is modified to Tyrosine amide.

It belongs to the long (4 C-C) scorpion toxin superfamily. Sodium channel inhibitor family. Beta subfamily. As to expression, expressed by the venom gland.

The protein localises to the secreted. Beta toxins bind voltage-independently at site-4 of sodium channels (Nav) and shift the voltage of activation toward more negative potentials thereby affecting sodium channel activation and promoting spontaneous and repetitive firing. The sequence is that of Toxin Cll3 from Centruroides limpidus (Mexican scorpion).